Consider the following 133-residue polypeptide: Ribonuclease P protein component (133 aa).

The protein belongs to the RnpA family. Consists of a catalytic RNA component (M1 or rnpB) and a protein subunit.

The catalysed reaction is Endonucleolytic cleavage of RNA, removing 5'-extranucleotides from tRNA precursor.. Its function is as follows. RNaseP catalyzes the removal of the 5'-leader sequence from pre-tRNA to produce the mature 5'-terminus. It can also cleave other RNA substrates such as 4.5S RNA. The protein component plays an auxiliary but essential role in vivo by binding to the 5'-leader sequence and broadening the substrate specificity of the ribozyme. The chain is Ribonuclease P protein component from Corynebacterium efficiens (strain DSM 44549 / YS-314 / AJ 12310 / JCM 11189 / NBRC 100395).